Reading from the N-terminus, the 130-residue chain is ESAT-6 secretion system extracellular protein C (130 aa).

It belongs to the EsxC family.

It is found in the secreted. The polypeptide is ESAT-6 secretion system extracellular protein C (Staphylococcus aureus (strain MSSA476)).